The sequence spans 337 residues: Ribonucleoside-diphosphate reductase small chain (337 aa).

Residues D85, E116, and H119 each coordinate Fe cation. The active site involves Y123. Positions 178, 212, and 215 each coordinate Fe cation.

This sequence belongs to the ribonucleoside diphosphate reductase small chain family. Heterodimer of a large and a small subunit. Requires Fe cation as cofactor.

It catalyses the reaction a 2'-deoxyribonucleoside 5'-diphosphate + [thioredoxin]-disulfide + H2O = a ribonucleoside 5'-diphosphate + [thioredoxin]-dithiol. Its function is as follows. Provides the precursors necessary for DNA synthesis. Catalyzes the biosynthesis of deoxyribonucleotides from the corresponding ribonucleotides. The polypeptide is Ribonucleoside-diphosphate reductase small chain (RNR2) (Trypanosoma brucei brucei).